Consider the following 284-residue polypeptide: Tropomyosin (284 aa).

A disordered region spans residues 1–39 (MDAIKKKMQAMKLEKDNAMDRADTLEQQNKEANIRAEKT). The stretch at 1 to 284 (MDAIKKKMQA…DQTFSELSGY (284 aa)) forms a coiled coil. A compositionally biased stretch (basic and acidic residues) spans 12–39 (KLEKDNAMDRADTLEQQNKEANIRAEKT).

The protein belongs to the tropomyosin family. Homodimer.

Tropomyosin, in association with the troponin complex, plays a central role in the calcium dependent regulation of muscle contraction. The protein is Tropomyosin (TM1) of Homarus americanus (American lobster).